We begin with the raw amino-acid sequence, 95 residues long: uncharacterized protein (95 aa).

2 stretches are compositionally biased toward basic and acidic residues: residues 1–28 (MRRAEVKRSAHGPADEKAQTGSPRKERC) and 41–53 (DERVPSDPEKGRP). The tract at residues 1-73 (MRRAEVKRSA…RTSRAGSSWQ (73 aa)) is disordered.

This is an uncharacterized protein from Homo sapiens (Human).